We begin with the raw amino-acid sequence, 442 residues long: Glutamate synthase large subunit-like protein (442 aa).

A disordered region spans residues leucine 108–histidine 133. Residues glycine 109–threonine 121 are compositionally biased toward low complexity.

Belongs to the glutamate synthase family.

The sequence is that of Glutamate synthase large subunit-like protein (glxD) from Rhizobium meliloti (strain 1021) (Ensifer meliloti).